Consider the following 124-residue polypeptide: Small ribosomal subunit protein bS16 (124 aa).

The interval 80 to 124 (AGLAKRPARNNPTKAQPGKKAQERAAEAKQKAEEAAAAASEAAAE) is disordered. Residues 99 to 113 (KAQERAAEAKQKAEE) show a composition bias toward basic and acidic residues. A compositionally biased stretch (low complexity) spans 114–124 (AAAAASEAAAE).

The protein belongs to the bacterial ribosomal protein bS16 family.

The polypeptide is Small ribosomal subunit protein bS16 (Rhizobium meliloti (strain 1021) (Ensifer meliloti)).